The sequence spans 544 residues: Membrane protein insertase YidC (544 aa).

A helical membrane pass occupies residues 6–26; it reads NILLIGLLFVSFLLWQQWQAD. Residues 34 to 58 form a disordered region; the sequence is AAQTQSSIPASTVADSHSSDVPDAD. The segment covering 39-49 has biased composition (polar residues); that stretch reads SSIPASTVADS. Transmembrane regions (helical) follow at residues 345–365, 423–443, 460–480, and 503–523; these read LLMF…LITL, GGCL…WVLL, LSVQ…MFVM, and VIFT…WLVG.

It belongs to the OXA1/ALB3/YidC family. Type 1 subfamily. In terms of assembly, interacts with the Sec translocase complex via SecD. Specifically interacts with transmembrane segments of nascent integral membrane proteins during membrane integration.

It is found in the cell inner membrane. In terms of biological role, required for the insertion and/or proper folding and/or complex formation of integral membrane proteins into the membrane. Involved in integration of membrane proteins that insert both dependently and independently of the Sec translocase complex, as well as at least some lipoproteins. Aids folding of multispanning membrane proteins. The chain is Membrane protein insertase YidC from Shewanella halifaxensis (strain HAW-EB4).